Consider the following 196-residue polypeptide: MTWQNDYSRDYEVKNHMECQNRSDKYIWSPHDAYFYKGLSELIVDIDRLIYLSLEKIRKDFVFINLNTDSLTEFINRDNEWLSAVKGKQVVLIAARKSEALANYWYYNSNIRGVVYAGLSRDIRKELAYVINGRFLRKDIKKDKITDREMEIIRMMAQGMLPKSIARIENCSVKTVYTHRRNAEAKLYSKLYKLVQ.

One can recognise an HTH luxR-type domain in the interval 138–196 (KDIKKDKITDREMEIIRMMAQGMLPKSIARIENCSVKTVYTHRRNAEAKLYSKLYKLVQ). Residues 162–181 (PKSIARIENCSVKTVYTHRR) constitute a DNA-binding region (H-T-H motif).

The protein belongs to the EcpR/MatA family.

It is found in the cytoplasm. In terms of biological role, part of the ecpRABCDE operon, which encodes the E.coli common pilus (ECP). ECP is found in both commensal and pathogenic strains and plays a dual role in early-stage biofilm development and host cell recognition. Positively regulates the expression of the ecp operon. This chain is HTH-type transcriptional regulator EcpR (ecpR), found in Escherichia coli O81 (strain ED1a).